The sequence spans 349 residues: Protein O-mannose kinase (349 aa).

The Cytoplasmic segment spans residues 1 to 19 (MGQQHGTRNGLTHRELPRG). The helical; Signal-anchor for type II membrane protein transmembrane segment at 20 to 42 (VGLLLAMALMNVALYLCLDQLFI) threads the bilayer. The Lumenal segment spans residues 43–349 (SPGRSTADSR…TVMSQTKEML (307 aa)). 3 N-linked (GlcNAc...) asparagine glycosylation sites follow: asparagine 66, asparagine 164, and asparagine 219. Residues 80–349 (VRQLKRVGEG…TVMSQTKEML (270 aa)) form the Protein kinase domain.

Belongs to the protein kinase superfamily. Ser/Thr protein kinase family. STKL subfamily.

It localises to the endoplasmic reticulum membrane. It catalyses the reaction 3-O-[beta-D-GalNAc-(1-&gt;3)-beta-D-GlcNAc-(1-&gt;4)-alpha-D-Man]-L-Thr-[protein] + ATP = 3-O-[beta-D-GalNAc-(1-&gt;3)-beta-D-GlcNAc-(1-&gt;4)-(O-6-P-alpha-D-Man)]-Thr-[protein] + ADP + H(+). Protein O-mannose kinase that specifically mediates phosphorylation at the 6-position of an O-mannose of the trisaccharide (N-acetylgalactosamine (GalNAc)-beta-1,3-N-acetylglucosamine (GlcNAc)-beta-1,4-mannose) to generate phosphorylated O-mannosyl trisaccharide (N-acetylgalactosamine-beta-1,3-N-acetylglucosamine-beta-1,4-(phosphate-6-)mannose). Phosphorylated O-mannosyl trisaccharide is a carbohydrate structure present in alpha-dystroglycan (DAG1), which is required for binding laminin G-like domain-containing extracellular proteins with high affinity. Only shows kinase activity when the GalNAc-beta-3-GlcNAc-beta-terminus is linked to the 4-position of O-mannose, suggesting that this disaccharide serves as the substrate recognition motif. This chain is Protein O-mannose kinase (Pomk), found in Mus musculus (Mouse).